The primary structure comprises 203 residues: Dual-action ribosomal maturation protein DarP (203 aa).

The span at 1 to 13 (MQPMTRNSRNSPG) shows a compositional bias: polar residues. The segment at 1–39 (MQPMTRNSRNSPGSRFPGAFAPEPDMDEPKSKSQKKRDM) is disordered. Residues 27–39 (DEPKSKSQKKRDM) are compositionally biased toward basic and acidic residues.

It belongs to the DarP family.

Its subcellular location is the cytoplasm. Member of a network of 50S ribosomal subunit biogenesis factors which assembles along the 30S-50S interface, preventing incorrect 23S rRNA structures from forming. Promotes peptidyl transferase center (PTC) maturation. The protein is Dual-action ribosomal maturation protein DarP of Cupriavidus pinatubonensis (strain JMP 134 / LMG 1197) (Cupriavidus necator (strain JMP 134)).